The following is a 252-amino-acid chain: Trans-aconitate 2-methyltransferase (252 aa).

Belongs to the methyltransferase superfamily. Tam family.

Its subcellular location is the cytoplasm. The enzyme catalyses trans-aconitate + S-adenosyl-L-methionine = (E)-3-(methoxycarbonyl)pent-2-enedioate + S-adenosyl-L-homocysteine. Its function is as follows. Catalyzes the S-adenosylmethionine monomethyl esterification of trans-aconitate. The sequence is that of Trans-aconitate 2-methyltransferase from Shigella flexneri serotype 5b (strain 8401).